The following is a 146-amino-acid chain: Large-conductance mechanosensitive channel (146 aa).

2 helical membrane passes run 15 to 35 and 81 to 101; these read VSLAIGVVIGGAFSKIVTSLV and GIFINNIIDFLIVAFSIFIII.

The protein belongs to the MscL family. Homopentamer.

The protein localises to the cell membrane. Functionally, channel that opens in response to stretch forces in the membrane lipid bilayer. May participate in the regulation of osmotic pressure changes within the cell. In Clostridium beijerinckii (strain ATCC 51743 / NCIMB 8052) (Clostridium acetobutylicum), this protein is Large-conductance mechanosensitive channel.